A 140-amino-acid polypeptide reads, in one-letter code: Methylglyoxal synthase (140 aa).

The MGS-like domain occupies 1-140; sequence MNIALIAHDE…KERQEKEGTP (140 aa). Residues histidine 8, lysine 12, 34–37, and 54–55 each bind substrate; these read TGTT and SG. Aspartate 60 (proton donor/acceptor) is an active-site residue. Residue histidine 87 participates in substrate binding.

The protein belongs to the methylglyoxal synthase family.

The enzyme catalyses dihydroxyacetone phosphate = methylglyoxal + phosphate. Catalyzes the formation of methylglyoxal from dihydroxyacetone phosphate. The sequence is that of Methylglyoxal synthase from Oceanobacillus iheyensis (strain DSM 14371 / CIP 107618 / JCM 11309 / KCTC 3954 / HTE831).